The following is a 215-amino-acid chain: Probable transaldolase (215 aa).

Lysine 83 serves as the catalytic Schiff-base intermediate with substrate.

The protein belongs to the transaldolase family. Type 3B subfamily.

It localises to the cytoplasm. It catalyses the reaction D-sedoheptulose 7-phosphate + D-glyceraldehyde 3-phosphate = D-erythrose 4-phosphate + beta-D-fructose 6-phosphate. Its pathway is carbohydrate degradation; pentose phosphate pathway; D-glyceraldehyde 3-phosphate and beta-D-fructose 6-phosphate from D-ribose 5-phosphate and D-xylulose 5-phosphate (non-oxidative stage): step 2/3. Functionally, transaldolase is important for the balance of metabolites in the pentose-phosphate pathway. This Pelotomaculum thermopropionicum (strain DSM 13744 / JCM 10971 / SI) protein is Probable transaldolase.